The primary structure comprises 121 residues: MIFELSRANVADNSGAKQVGVIRVLGGSKKKVAEIGDVVICSVKKALPSGDVKAGQVLKAVVVRTKRNTYRSNGSYIRFDDNAVVILKDDGTPVGTRVFGPVAREIREKYPKIVSLALEVL.

It belongs to the universal ribosomal protein uL14 family. As to quaternary structure, part of the 50S ribosomal subunit. Forms a cluster with proteins L3 and L19. In the 70S ribosome, L14 and L19 interact and together make contacts with the 16S rRNA in bridges B5 and B8.

Its function is as follows. Binds to 23S rRNA. Forms part of two intersubunit bridges in the 70S ribosome. This Mycoplasmopsis synoviae (strain 53) (Mycoplasma synoviae) protein is Large ribosomal subunit protein uL14.